Here is a 76-residue protein sequence, read N- to C-terminus: U7-lycotoxin-Ls1c (76 aa).

Residues 1–22 (MKLIIFTGLALFLLVSLIDVEA) form the signal peptide. Positions 23 to 26 (QNEG) are excised as a propeptide.

Belongs to the neurotoxin 19 (CSTX) family. 07 (U7-Lctx) subfamily. Contains 4 disulfide bonds. As to expression, expressed by the venom gland.

The protein resides in the secreted. This chain is U7-lycotoxin-Ls1c, found in Lycosa singoriensis (Wolf spider).